The following is a 148-amino-acid chain: MRAVVQRVSEAEVKVDGKIVGKISDGLMVLLGVQKDDTEKDLDWMLEKILNLRIFEDETGKMNLSLLEKGGQLMLVSQFTLLGDARKGRRPSFTEAAPPDKAKEIFDRFVKKASERVHVETGVFQAHMLVSLTNDGPVTILLDSRKQF.

The short motif at 136-137 (GP) is the Gly-cisPro motif, important for rejection of L-amino acids element.

This sequence belongs to the DTD family. In terms of assembly, homodimer.

Its subcellular location is the cytoplasm. It catalyses the reaction glycyl-tRNA(Ala) + H2O = tRNA(Ala) + glycine + H(+). The enzyme catalyses a D-aminoacyl-tRNA + H2O = a tRNA + a D-alpha-amino acid + H(+). Its function is as follows. An aminoacyl-tRNA editing enzyme that deacylates mischarged D-aminoacyl-tRNAs. Also deacylates mischarged glycyl-tRNA(Ala), protecting cells against glycine mischarging by AlaRS. Acts via tRNA-based rather than protein-based catalysis; rejects L-amino acids rather than detecting D-amino acids in the active site. By recycling D-aminoacyl-tRNA to D-amino acids and free tRNA molecules, this enzyme counteracts the toxicity associated with the formation of D-aminoacyl-tRNA entities in vivo and helps enforce protein L-homochirality. The protein is D-aminoacyl-tRNA deacylase of Kosmotoga olearia (strain ATCC BAA-1733 / DSM 21960 / TBF 19.5.1).